The sequence spans 516 residues: Citrate synthase, glyoxysomal (516 aa).

The N-terminal 43 residues, 1 to 43 (MPTDMELSPSNVARHRLAVLAAHLSAASLEPPVMASSLEAHCV), are a transit peptide targeting the glyoxysome. Active-site residues include His329, His368, and Asp424.

It belongs to the citrate synthase family.

Its subcellular location is the glyoxysome. It catalyses the reaction oxaloacetate + acetyl-CoA + H2O = citrate + CoA + H(+). It participates in carbohydrate metabolism; glyoxylate cycle; isocitrate from oxaloacetate: step 1/2. The polypeptide is Citrate synthase, glyoxysomal (Cucurbita maxima (Pumpkin)).